The following is a 536-amino-acid chain: Ribulokinase (536 aa).

It belongs to the ribulokinase family.

The catalysed reaction is D-ribulose + ATP = D-ribulose 5-phosphate + ADP + H(+). It catalyses the reaction L-ribulose + ATP = L-ribulose 5-phosphate + ADP + H(+). It functions in the pathway carbohydrate degradation; L-arabinose degradation via L-ribulose; D-xylulose 5-phosphate from L-arabinose (bacterial route): step 2/3. In Staphylococcus epidermidis (strain ATCC 35984 / DSM 28319 / BCRC 17069 / CCUG 31568 / BM 3577 / RP62A), this protein is Ribulokinase.